The sequence spans 82 residues: ATP synthase subunit c (82 aa).

A run of 2 helical transmembrane segments spans residues 18-38 and 61-81; these read LGEALGAGLAVIGAGLGIGKI and IIAAALVEGVSLFAVVVCGFL.

The protein belongs to the ATPase C chain family. F-type ATPases have 2 components, F(1) - the catalytic core - and F(0) - the membrane proton channel. F(1) has five subunits: alpha(3), beta(3), gamma(1), delta(1), epsilon(1). F(0) has three main subunits: a(1), b(2) and c(10-14). The alpha and beta chains form an alternating ring which encloses part of the gamma chain. F(1) is attached to F(0) by a central stalk formed by the gamma and epsilon chains, while a peripheral stalk is formed by the delta and b chains.

The protein localises to the cell inner membrane. F(1)F(0) ATP synthase produces ATP from ADP in the presence of a proton or sodium gradient. F-type ATPases consist of two structural domains, F(1) containing the extramembraneous catalytic core and F(0) containing the membrane proton channel, linked together by a central stalk and a peripheral stalk. During catalysis, ATP synthesis in the catalytic domain of F(1) is coupled via a rotary mechanism of the central stalk subunits to proton translocation. Functionally, key component of the F(0) channel; it plays a direct role in translocation across the membrane. A homomeric c-ring of between 10-14 subunits forms the central stalk rotor element with the F(1) delta and epsilon subunits. The protein is ATP synthase subunit c of Azobacteroides pseudotrichonymphae genomovar. CFP2.